The following is a 540-amino-acid chain: Sterol O-acyltransferase 1 (540 aa).

The tract at residues 1–20 (MSLRNRLSKSGENPEQDEAQ) is disordered. Over 1 to 128 (MSLRNRLSKS…LDELFEVDHI (128 aa)) the chain is Cytoplasmic. Position 2 is a phosphoserine (Ser-2). His-127 is a cholesterol binding site. The chain crosses the membrane as a helical span at residues 129 to 150 (RTIYHMFIALLILFVLSTIVVD). The Lumenal portion of the chain corresponds to 151–170 (YIDEGRLVLEFNLLAYAFGK). Residues 171–196 (FPTVIWTWWAMFLSTLSIPYFLFQRW) form a helical membrane-spanning segment. At 197 to 208 (AHGYSKSSHPLI) the chain is on the cytoplasmic side. A helical membrane pass occupies residues 209 to 234 (YSLVHGLLFLVFQLGVLGFVPTYVVL). Residues 235–242 (AYTLPPAS) lie on the Lumenal side of the membrane. The helical transmembrane segment at 243 to 266 (RFILILEQIRLIMKAHSFVRENIP) threads the bilayer. Residues 267–309 (RVLNAAKEKSSKDPLPTVNQYLYFLFAPTLIYRDNYPRTPTVR) lie on the Cytoplasmic side of the membrane. The helical transmembrane segment at 310–342 (WGYVAMQFLQVFGCLFYVYYIFERLCAPLFRNI) threads the bilayer. Residues 343–359 (KQEPFSARVLVLCVFNS) are Lumenal-facing. A helical membrane pass occupies residues 360–385 (ILPGVLILFLSFFAFLHCWLNAFAEM). The Cytoplasmic portion of the chain corresponds to 386 to 433 (LRFGDRMFYKDWWNSTSYSNYYRTWNVVVHDWLYYYVYKDLLWFFSKR). The FYXDWWN motif signature appears at 393–399 (FYKDWWN). An acyl-CoA is bound by residues Asn-405, Arg-408, Asn-411, His-415, Tyr-423, Lys-435, and Ser-446. The helical transmembrane segment at 434–458 (FKSAAMLAVFALSAVVHEYALAICL) threads the bilayer. His-450 is a catalytic residue. The Lumenal portion of the chain corresponds to 459–464 (SYFYPV). The chain crosses the membrane as a helical span at residues 465–480 (LFVLFMFFGMAFNFIV). At 481-486 (NDSRKR) the chain is on the cytoplasmic side. The helical transmembrane segment at 487 to 518 (PIWNIMVWASLFLGYGLILCFYSQEWYARQHC) threads the bilayer. Cys-518 and Cys-536 are oxidised to a cystine. Over 519–540 (PLKNPTFLDYVRPRTWTCRYVF) the chain is Lumenal.

It belongs to the membrane-bound acyltransferase family. Sterol o-acyltransferase subfamily. As to quaternary structure, may form homo- or heterodimers. Interacts with UBIAD1.

It localises to the endoplasmic reticulum membrane. The catalysed reaction is a sterol + a long-chain fatty acyl-CoA = a long-chain 3-hydroxysterol ester + CoA. It catalyses the reaction cholesterol + an acyl-CoA = a cholesterol ester + CoA. The enzyme catalyses cholesterol + (9Z)-octadecenoyl-CoA = cholesteryl (9Z-octadecenoate) + CoA. It carries out the reaction cholesterol + hexadecanoyl-CoA = cholesteryl hexadecanoate + CoA. The catalysed reaction is octadecanoyl-CoA + cholesterol = cholesteryl octadecanoate + CoA. It catalyses the reaction (9Z,12Z)-octadecadienoyl-CoA + cholesterol = cholesteryl (9Z,12Z)-octadecadienoate + CoA. The enzyme catalyses (5Z,8Z,11Z,14Z)-eicosatetraenoyl-CoA + cholesterol = cholesteryl (5Z,8Z,11Z,14Z)-eicosatetraenoate + CoA. It carries out the reaction (9Z)-hexadecenoyl-CoA + cholesterol = cholesteryl (9Z)-hexadecenoate + CoA. The catalysed reaction is (11Z)-octadecenoyl-CoA + cholesterol = cholesteryl (11Z)-octadecenoate + CoA. It catalyses the reaction (7Z)-octadecenoyl-CoA + cholesterol = cholesteryl (7Z)-octadecenoate + CoA. Catalyzes the formation of fatty acid-cholesterol esters, which are less soluble in membranes than cholesterol. Plays a role in lipoprotein assembly and dietary cholesterol absorption. Preferentially utilizes oleoyl-CoA ((9Z)-octadecenoyl-CoA) as a substrate: shows a higher activity towards an acyl-CoA substrate with a double bond at the delta-9 position (9Z) than towards saturated acyl-CoA or an unsaturated acyl-CoA with a double bond at the delta-7 (7Z) or delta-11 (11Z) positions. The chain is Sterol O-acyltransferase 1 from Mus musculus (Mouse).